The sequence spans 444 residues: Aspartate--tRNA(Asp/Asn) ligase (444 aa).

An L-aspartate-binding site is contributed by glutamate 176. The tract at residues 198–201 (QLFK) is aspartate. Arginine 220 contacts L-aspartate. ATP is bound by residues 220-222 (RAE), 228-230 (RHL), and glutamate 367. Residues glutamate 367 and serine 370 each coordinate Mg(2+). 2 residues coordinate L-aspartate: serine 370 and arginine 374. 415–418 (GCER) is a binding site for ATP.

The protein belongs to the class-II aminoacyl-tRNA synthetase family. Type 2 subfamily. In terms of assembly, homodimer. Mg(2+) is required as a cofactor.

The protein localises to the cytoplasm. It catalyses the reaction tRNA(Asx) + L-aspartate + ATP = L-aspartyl-tRNA(Asx) + AMP + diphosphate. Its function is as follows. Aspartyl-tRNA synthetase with relaxed tRNA specificity since it is able to aspartylate not only its cognate tRNA(Asp) but also tRNA(Asn). Reaction proceeds in two steps: L-aspartate is first activated by ATP to form Asp-AMP and then transferred to the acceptor end of tRNA(Asp/Asn). The polypeptide is Aspartate--tRNA(Asp/Asn) ligase (Methanosarcina barkeri (strain Fusaro / DSM 804)).